The following is a 622-amino-acid chain: Iron transport multicopper oxidase FET3 (622 aa).

The N-terminal stretch at 1–22 (MRPKLLSVEAALFLALPELARA) is a signal peptide. Residues 23-553 (ATRKFDFEIG…NTLPPGFTPR (531 aa)) lie on the Extracellular side of the membrane. Plastocyanin-like domains are found at residues 31-146 (IGWV…VHDK), 156-303 (EEVV…VYDK), and 363-498 (YTEA…VEDP). N-linked (GlcNAc...) asparagine glycosylation is present at asparagine 76. 2 residues coordinate Cu cation: histidine 82 and histidine 84. N-linked (GlcNAc...) asparagine glycans are attached at residues asparagine 89 and asparagine 114. The Cu cation site is built by histidine 126 and histidine 128. N-linked (GlcNAc...) asparagine glycosylation is found at asparagine 196, asparagine 200, and asparagine 294. Cu cation is bound by residues histidine 414, histidine 417, and histidine 419. A glycan (N-linked (GlcNAc...) asparagine) is linked at asparagine 440. Positions 479, 480, 481, and 485 each coordinate Cu cation. Residues 554-574 (GIVALVFSCICGILGVAVVAW) traverse the membrane as a helical segment. Residues 575–622 (YGFSAPVGSTSAGALSAGLVENDSGDVHSAQKGPQETVVSPTGDARSH) lie on the Cytoplasmic side of the membrane. A disordered region spans residues 597–622 (DSGDVHSAQKGPQETVVSPTGDARSH).

It belongs to the multicopper oxidase family.

The protein localises to the cell membrane. Functionally, cell surface ferroxidase; part of the reductive iron assimilatory system (RIA), a siderophore-independent iron acquisition process. Required to oxidize Fe(2+) and release it from the transporter. Seems not to be involved in virulence. The polypeptide is Iron transport multicopper oxidase FET3 (Gibberella zeae (strain ATCC MYA-4620 / CBS 123657 / FGSC 9075 / NRRL 31084 / PH-1) (Wheat head blight fungus)).